Here is a 200-residue protein sequence, read N- to C-terminus: Serine/threonine-protein kinase mos (200 aa).

Positions 2 to 200 (LCLLQPLGSG…ELLKGERVTA (199 aa)) constitute a Protein kinase domain. Residues 8–16 (LGSGGFGSV) and Lys-29 contribute to the ATP site. Catalysis depends on Asp-143, which acts as the Proton acceptor.

It belongs to the protein kinase superfamily. Ser/Thr protein kinase family.

The enzyme catalyses L-seryl-[protein] + ATP = O-phospho-L-seryl-[protein] + ADP + H(+). It carries out the reaction L-threonyl-[protein] + ATP = O-phospho-L-threonyl-[protein] + ADP + H(+). The polypeptide is Serine/threonine-protein kinase mos (MOS) (Apteryx australis (Southern brown kiwi)).